Consider the following 339-residue polypeptide: Biotin synthase (339 aa).

Residues 55 to 288 (LSEGALHSCS…GKIIKFAAGR (234 aa)) form the Radical SAM core domain. Residues C73, C77, and C80 each contribute to the [4Fe-4S] cluster site. Residues C152, C213, and K283 each contribute to the [2Fe-2S] cluster site.

The protein belongs to the radical SAM superfamily. Biotin synthase family. Homodimer. It depends on [4Fe-4S] cluster as a cofactor. Requires [2Fe-2S] cluster as cofactor.

It catalyses the reaction (4R,5S)-dethiobiotin + (sulfur carrier)-SH + 2 reduced [2Fe-2S]-[ferredoxin] + 2 S-adenosyl-L-methionine = (sulfur carrier)-H + biotin + 2 5'-deoxyadenosine + 2 L-methionine + 2 oxidized [2Fe-2S]-[ferredoxin]. It functions in the pathway cofactor biosynthesis; biotin biosynthesis; biotin from 7,8-diaminononanoate: step 2/2. In terms of biological role, catalyzes the conversion of dethiobiotin (DTB) to biotin by the insertion of a sulfur atom into dethiobiotin via a radical-based mechanism. In Chlorobium phaeobacteroides (strain BS1), this protein is Biotin synthase.